The chain runs to 352 residues: C-C chemokine receptor type 5 (352 aa).

The Extracellular segment spans residues 1 to 30; it reads MDYQVSSPTYDIDYYTSEPCQKVNVKQIAA. A Sulfotyrosine modification is found at Tyr3. Ser6 and Ser7 each carry an O-linked (GalNAc...) serine glycan. 3 positions are modified to sulfotyrosine: Tyr10, Tyr14, and Tyr15. 2 disulfide bridges follow: Cys20–Cys269 and Cys101–Cys178. A helical transmembrane segment spans residues 31 to 58; that stretch reads RLLPPLYSLVFIFGFVGNILVVLILINC. At 59–68 the chain is on the cytoplasmic side; it reads KRLKSMTDIY. The chain crosses the membrane as a helical span at residues 69 to 89; sequence LLNLAISDLFFLLTVPFWAHY. Over 90–102 the chain is Extracellular; it reads AAAQWDFGNTMCQ. Residues 103-124 traverse the membrane as a helical segment; sequence LLTGLYFIGFFSGIFFIILLTI. The Cytoplasmic portion of the chain corresponds to 125 to 141; sequence DRYLAIVHAVFALKART. Residues 142–166 traverse the membrane as a helical segment; the sequence is VTFGVVTSVITWVVAVFASLPGIIF. Topologically, residues 167-198 are extracellular; that stretch reads TRSQREGLHYTCSSHFPYSQYQFWKNFQTLKI. The chain crosses the membrane as a helical span at residues 199–218; that stretch reads VILGLVLPLLVMVICYSGIL. Residues 219 to 235 lie on the Cytoplasmic side of the membrane; that stretch reads KTLLRCRNEKKRHRAVR. A helical transmembrane segment spans residues 236–260; it reads LIFTIMIVYFLFWAPYNIVLLLNTF. At 261 to 277 the chain is on the extracellular side; the sequence is QEFFGLNNCSSSNRLDQ. Residues 278–301 form a helical membrane-spanning segment; that stretch reads AMQVTETLGMTHCCINPIIYAFVG. Over 302 to 352 the chain is Cytoplasmic; sequence EKFRNYLLVFFQKHIAKRFCKCCRIFQQEAPERASSVYTRSTGEQEISVGL. 3 S-palmitoyl cysteine lipidation sites follow: Cys321, Cys323, and Cys324. Residues Ser336, Ser337, Ser342, and Ser349 each carry the phosphoserine; by BARK1 modification.

The protein belongs to the G-protein coupled receptor 1 family. As to quaternary structure, interacts with PRAF2. Efficient ligand binding to CCL3/MIP-1alpha and CCL4/MIP-1beta requires sulfation, O-glycosylation and sialic acid modifications. Glycosylation on Ser-6 is required for efficient binding of CCL4. Interacts with GRK2. Interacts with ARRB1 and ARRB2. Interacts with CNIH4. Interacts with S100A4; this interaction stimulates T-lymphocyte chemotaxis. In terms of processing, sulfated on at least 2 of the N-terminal tyrosines. Sulfation is required for efficient binding of the chemokines, CCL3 and CCL4. Post-translationally, palmitoylation in the C-terminal is important for cell surface expression. Phosphorylation on serine residues in the C-terminal is stimulated by binding CC chemokines especially by APO-RANTES. In terms of processing, O-glycosylated, but not N-glycosylated. Ser-6 appears to be the major site even if Ser-7 may be also O-glycosylated. Also sialylated glycans present which contribute to chemokine binding. Thr-16 and Ser-17 may also be glycosylated and, if so, with small moieties such as a T-antigen.

It is found in the cell membrane. Receptor for a number of inflammatory CC-chemokines including CCL3/MIP-1-alpha, CCL4/MIP-1-beta and RANTES and subsequently transduces a signal by increasing the intracellular calcium ion level. May play a role in the control of granulocytic lineage proliferation or differentiation. Participates in T-lymphocyte migration to the infection site by acting as a chemotactic receptor. This Colobus polykomos (Western black-and-white colobus monkey) protein is C-C chemokine receptor type 5 (CCR5).